Consider the following 143-residue polypeptide: Small ribosomal subunit protein uS11c (143 aa).

This sequence belongs to the universal ribosomal protein uS11 family. Part of the 30S ribosomal subunit.

The protein localises to the plastid. It localises to the chloroplast. The chain is Small ribosomal subunit protein uS11c from Zea mays (Maize).